A 293-amino-acid polypeptide reads, in one-letter code: MASYTMKLSTYIEMWSQYETGLSMAEKIEKGRPKLFDFQYPIFDESYRKVFETHFIRNFYMREIGFETEGLFKFNLETWLIINMPYFNKLFESELIKYDPLENTRLNTTGNKKNDTERNDNRDTTGSMKADGKSNTKTSDKTNATGSSKEDGKTTGSVTDDNFNRKIDSDQPDSRLNLTTNDGQGTLEYASAIEENNTNNKRNTTGTNNVTSSAESESTGSGTSDTVTTDNANTTTNDKLNSQINNVEDYIESKIGKSGTQSYASLVQDYRAALLRIEKRIFDEMQELFMLVY.

Positions 104 to 240 (TRLNTTGNKK…NANTTTNDKL (137 aa)) are disordered. Basic and acidic residues-rich tracts occupy residues 112 to 123 (KKNDTERNDNRD), 130 to 140 (ADGKSNTKTSD), and 162 to 173 (NFNRKIDSDQPD). Residues 174-184 (SRLNLTTNDGQ) are compositionally biased toward polar residues. Low complexity predominate over residues 196–238 (NNTNNKRNTTGTNNVTSSAESESTGSGTSDTVTTDNANTTTND).

Belongs to the phi29likevirus proximal tail tube connector protein family.

The protein localises to the virion. In terms of biological role, forms the proximal part of the tail tube. The protein is Proximal tail tube connector protein (11) of Bacillus subtilis (Bacteriophage B103).